The sequence spans 1905 residues: Alpha-2-macroglobulin (1905 aa).

The signal sequence occupies residues 1–21 (MNKQYFLSLFSTLAVALTLSG). Residue Cys-22 is the site of N-palmitoyl cysteine attachment. Residue Cys-22 is the site of S-diacylglycerol cysteine attachment. A cross-link (isoglutamyl cysteine thioester (Cys-Gln)) is located at residues 1438–1441 (CTEQ).

It belongs to the protease inhibitor I39 (alpha-2-macroglobulin) family. Bacterial alpha-2-macroglobulin subfamily.

Its subcellular location is the cell membrane. Its function is as follows. Protects the bacterial cell from host peptidases. This is Alpha-2-macroglobulin from Pasteurella multocida (strain Pm70).